The following is a 498-amino-acid chain: ATP synthase subunit beta, chloroplastic (498 aa).

An ATP-binding site is contributed by G172 to T179.

Belongs to the ATPase alpha/beta chains family. F-type ATPases have 2 components, CF(1) - the catalytic core - and CF(0) - the membrane proton channel. CF(1) has five subunits: alpha(3), beta(3), gamma(1), delta(1), epsilon(1). CF(0) has four main subunits: a(1), b(1), b'(1) and c(9-12).

The protein resides in the plastid. Its subcellular location is the chloroplast thylakoid membrane. It catalyses the reaction ATP + H2O + 4 H(+)(in) = ADP + phosphate + 5 H(+)(out). Produces ATP from ADP in the presence of a proton gradient across the membrane. The catalytic sites are hosted primarily by the beta subunits. In Lolium perenne (Perennial ryegrass), this protein is ATP synthase subunit beta, chloroplastic.